A 513-amino-acid polypeptide reads, in one-letter code: ATP synthase subunit alpha (513 aa).

169 to 176 (GDRQIGKT) is a binding site for ATP.

It belongs to the ATPase alpha/beta chains family. F-type ATPases have 2 components, CF(1) - the catalytic core - and CF(0) - the membrane proton channel. CF(1) has five subunits: alpha(3), beta(3), gamma(1), delta(1), epsilon(1). CF(0) has three main subunits: a(1), b(2) and c(9-12). The alpha and beta chains form an alternating ring which encloses part of the gamma chain. CF(1) is attached to CF(0) by a central stalk formed by the gamma and epsilon chains, while a peripheral stalk is formed by the delta and b chains.

It localises to the cell inner membrane. It catalyses the reaction ATP + H2O + 4 H(+)(in) = ADP + phosphate + 5 H(+)(out). Its function is as follows. Produces ATP from ADP in the presence of a proton gradient across the membrane. The alpha chain is a regulatory subunit. This is ATP synthase subunit alpha from Francisella tularensis subsp. holarctica (strain OSU18).